Here is an 813-residue protein sequence, read N- to C-terminus: DNA gyrase subunit A (813 aa).

One can recognise a Topo IIA-type catalytic domain in the interval 38–504 (LPDVRDGLKP…EIEYLDVEDF (467 aa)). Catalysis depends on Y126, which acts as the O-(5'-phospho-DNA)-tyrosine intermediate. The short motif at 531-537 (QNRGGKG) is the GyrA-box element.

It belongs to the type II topoisomerase GyrA/ParC subunit family. In terms of assembly, heterotetramer, composed of two GyrA and two GyrB chains. In the heterotetramer, GyrA contains the active site tyrosine that forms a transient covalent intermediate with DNA, while GyrB binds cofactors and catalyzes ATP hydrolysis.

It localises to the cytoplasm. The catalysed reaction is ATP-dependent breakage, passage and rejoining of double-stranded DNA.. Its function is as follows. A type II topoisomerase that negatively supercoils closed circular double-stranded (ds) DNA in an ATP-dependent manner to modulate DNA topology and maintain chromosomes in an underwound state. Negative supercoiling favors strand separation, and DNA replication, transcription, recombination and repair, all of which involve strand separation. Also able to catalyze the interconversion of other topological isomers of dsDNA rings, including catenanes and knotted rings. Type II topoisomerases break and join 2 DNA strands simultaneously in an ATP-dependent manner. This is DNA gyrase subunit A from Treponema pallidum (strain Nichols).